The sequence spans 438 residues: 3-phosphoshikimate 1-carboxyvinyltransferase (438 aa).

Lys21 serves as a coordination point for phosphoenolpyruvate. 3-phosphoshikimate contacts are provided by Ser22 and Arg26. The phosphoenolpyruvate stretch occupies residues 93 to 96; the sequence is NSGT. Gly95, Thr96, and Arg123 together coordinate phosphoenolpyruvate. Positions 167, 168, 169, 315, and 342 each coordinate 3-phosphoshikimate. Residue Gln169 coordinates phosphoenolpyruvate. Residue Asp315 is the Proton acceptor of the active site. 2 residues coordinate phosphoenolpyruvate: Arg346 and Arg387.

It belongs to the EPSP synthase family. In terms of assembly, homodimer or homotetramer.

It localises to the cytoplasm. The enzyme catalyses 3-phosphoshikimate + phosphoenolpyruvate = 5-O-(1-carboxyvinyl)-3-phosphoshikimate + phosphate. It functions in the pathway metabolic intermediate biosynthesis; chorismate biosynthesis; chorismate from D-erythrose 4-phosphate and phosphoenolpyruvate: step 6/7. Functionally, catalyzes the transfer of the enolpyruvyl moiety of phosphoenolpyruvate (PEP) to the 5-hydroxyl of shikimate-3-phosphate (S3P) to produce enolpyruvyl shikimate-3-phosphate and inorganic phosphate. This Coxiella burnetii (strain RSA 493 / Nine Mile phase I) protein is 3-phosphoshikimate 1-carboxyvinyltransferase.